The chain runs to 137 residues: Large ribosomal subunit protein uL16c (137 aa).

This sequence belongs to the universal ribosomal protein uL16 family. As to quaternary structure, part of the 50S ribosomal subunit.

It is found in the plastid. Its subcellular location is the chloroplast. The polypeptide is Large ribosomal subunit protein uL16c (Bigelowiella natans (Pedinomonas minutissima)).